We begin with the raw amino-acid sequence, 242 residues long: Anamorsin homolog (242 aa).

Residues 1–140 (MMNFADTLVI…NVTAENPDFL (140 aa)) are N-terminal SAM-like domain. A linker region spans residues 141–162 (SNEDDDEGNSSDGEAYQNAEDN). The [4Fe-4S] cluster site is built by Cys-205, Cys-208, Cys-216, and Cys-219. 2 short sequence motifs (cx2C motif) span residues 205–208 (CGNC) and 216–219 (CASC). The tract at residues 205-219 (CGNCYLGDAFRCASC) is fe-S binding site B.

Belongs to the anamorsin family. As to quaternary structure, monomer. [4Fe-4S] cluster serves as cofactor.

It localises to the cytoplasm. The protein resides in the mitochondrion intermembrane space. Component of the cytosolic iron-sulfur (Fe-S) protein assembly (CIA) machinery. Required for the maturation of extramitochondrial Fe-S proteins. Part of an electron transfer chain functioning in an early step of cytosolic Fe-S biogenesis, facilitating the de novo assembly of a [4Fe-4S] cluster on the cytosolic Fe-S scaffold complex. Electrons are transferred from NADPH via a FAD- and FMN-containing diflavin oxidoreductase. Together with the diflavin oxidoreductase, also required for the assembly of the diferric tyrosyl radical cofactor of ribonucleotide reductase (RNR), probably by providing electrons for reduction during radical cofactor maturation in the catalytic small subunit. This Plasmodium knowlesi (strain H) protein is Anamorsin homolog.